A 694-amino-acid polypeptide reads, in one-letter code: Methionine--tRNA ligase (694 aa).

The 'HIGH' region motif lies at 14-24 (PYANGPIHLGH). Cysteine 145, cysteine 148, cysteine 158, and cysteine 161 together coordinate Zn(2+). The 'KMSKS' region signature appears at 330–334 (KMSKS). An ATP-binding site is contributed by lysine 333. The segment at 558-579 (SLQATAGQPEPHSQVRHAEHQQ) is disordered. One can recognise a tRNA-binding domain in the interval 593 to 694 (DFAKVDLRIA…EGAQPGMKVK (102 aa)).

The protein belongs to the class-I aminoacyl-tRNA synthetase family. MetG type 1 subfamily. In terms of assembly, homodimer. It depends on Zn(2+) as a cofactor.

Its subcellular location is the cytoplasm. It carries out the reaction tRNA(Met) + L-methionine + ATP = L-methionyl-tRNA(Met) + AMP + diphosphate. Is required not only for elongation of protein synthesis but also for the initiation of all mRNA translation through initiator tRNA(fMet) aminoacylation. In Methylococcus capsulatus (strain ATCC 33009 / NCIMB 11132 / Bath), this protein is Methionine--tRNA ligase.